We begin with the raw amino-acid sequence, 318 residues long: NADH-ubiquinone oxidoreductase chain 1 (318 aa).

8 helical membrane passes run 2-22, 69-89, 100-120, 146-166, 171-191, 231-251, 253-273, and 285-305; these read FMIN…FLTL, LLFT…WLPL, LGVL…LWSG, LAII…TNLI, HMWL…STLA, IMMM…TPLV, GIYT…FLWI, and LMHL…MWHV.

This sequence belongs to the complex I subunit 1 family. Core subunit of respiratory chain NADH dehydrogenase (Complex I) which is composed of 45 different subunits.

It localises to the mitochondrion inner membrane. The enzyme catalyses a ubiquinone + NADH + 5 H(+)(in) = a ubiquinol + NAD(+) + 4 H(+)(out). In terms of biological role, core subunit of the mitochondrial membrane respiratory chain NADH dehydrogenase (Complex I) which catalyzes electron transfer from NADH through the respiratory chain, using ubiquinone as an electron acceptor. Essential for the catalytic activity and assembly of complex I. The sequence is that of NADH-ubiquinone oxidoreductase chain 1 (MT-ND1) from Myrmecophaga tridactyla (Giant anteater).